Reading from the N-terminus, the 423-residue chain is Serine--tRNA ligase (423 aa).

The disordered stretch occupies residues 107-130 (PHDSVPDGKSENDNREIRQWGAPP). Residues 110–124 (SVPDGKSENDNREIR) are compositionally biased toward basic and acidic residues. An L-serine-binding site is contributed by 231 to 233 (TGE). An ATP-binding site is contributed by 262-264 (RSE). E285 provides a ligand contact to L-serine. 349-352 (EISS) provides a ligand contact to ATP. S385 contributes to the L-serine binding site.

Belongs to the class-II aminoacyl-tRNA synthetase family. Type-1 seryl-tRNA synthetase subfamily. As to quaternary structure, homodimer. The tRNA molecule binds across the dimer.

It is found in the cytoplasm. It carries out the reaction tRNA(Ser) + L-serine + ATP = L-seryl-tRNA(Ser) + AMP + diphosphate + H(+). It catalyses the reaction tRNA(Sec) + L-serine + ATP = L-seryl-tRNA(Sec) + AMP + diphosphate + H(+). The protein operates within aminoacyl-tRNA biosynthesis; selenocysteinyl-tRNA(Sec) biosynthesis; L-seryl-tRNA(Sec) from L-serine and tRNA(Sec): step 1/1. Its function is as follows. Catalyzes the attachment of serine to tRNA(Ser). Is also able to aminoacylate tRNA(Sec) with serine, to form the misacylated tRNA L-seryl-tRNA(Sec), which will be further converted into selenocysteinyl-tRNA(Sec). This chain is Serine--tRNA ligase, found in Coxiella burnetii (strain Dugway 5J108-111).